The following is a 171-amino-acid chain: 3-hydroxydecanoyl-[acyl-carrier-protein] dehydratase (171 aa).

Histidine 70 is an active-site residue.

Belongs to the thioester dehydratase family. FabA subfamily. As to quaternary structure, homodimer.

The protein resides in the cytoplasm. It carries out the reaction a (3R)-hydroxyacyl-[ACP] = a (2E)-enoyl-[ACP] + H2O. The catalysed reaction is (3R)-hydroxydecanoyl-[ACP] = (2E)-decenoyl-[ACP] + H2O. It catalyses the reaction (2E)-decenoyl-[ACP] = (3Z)-decenoyl-[ACP]. It functions in the pathway lipid metabolism; fatty acid biosynthesis. Its function is as follows. Necessary for the introduction of cis unsaturation into fatty acids. Catalyzes the dehydration of (3R)-3-hydroxydecanoyl-ACP to E-(2)-decenoyl-ACP and then its isomerization to Z-(3)-decenoyl-ACP. Can catalyze the dehydratase reaction for beta-hydroxyacyl-ACPs with saturated chain lengths up to 16:0, being most active on intermediate chain length. The chain is 3-hydroxydecanoyl-[acyl-carrier-protein] dehydratase from Pseudoalteromonas translucida (strain TAC 125).